A 120-amino-acid chain; its full sequence is Chaperonin GroEL (120 aa).

23–27 (DGTTT) is an ATP binding site.

The protein belongs to the chaperonin (HSP60) family. As to quaternary structure, forms a cylinder of 14 subunits composed of two heptameric rings stacked back-to-back. Interacts with the co-chaperonin GroES.

Its subcellular location is the cytoplasm. The enzyme catalyses ATP + H2O + a folded polypeptide = ADP + phosphate + an unfolded polypeptide.. Functionally, together with its co-chaperonin GroES, plays an essential role in assisting protein folding. The GroEL-GroES system forms a nano-cage that allows encapsulation of the non-native substrate proteins and provides a physical environment optimized to promote and accelerate protein folding. The polypeptide is Chaperonin GroEL (Mycolicibacterium fallax (Mycobacterium fallax)).